The chain runs to 270 residues: 4-hydroxy-tetrahydrodipicolinate reductase (270 aa).

NAD(+)-binding positions include 11–16 (GAGGRM) and E37. R38 contacts NADP(+). NAD(+)-binding positions include 101-103 (GTT) and 125-128 (APNM). The Proton donor/acceptor role is filled by H158. H159 contributes to the (S)-2,3,4,5-tetrahydrodipicolinate binding site. The active-site Proton donor is K162. 168 to 169 (GT) serves as a coordination point for (S)-2,3,4,5-tetrahydrodipicolinate.

This sequence belongs to the DapB family.

Its subcellular location is the cytoplasm. It carries out the reaction (S)-2,3,4,5-tetrahydrodipicolinate + NAD(+) + H2O = (2S,4S)-4-hydroxy-2,3,4,5-tetrahydrodipicolinate + NADH + H(+). The catalysed reaction is (S)-2,3,4,5-tetrahydrodipicolinate + NADP(+) + H2O = (2S,4S)-4-hydroxy-2,3,4,5-tetrahydrodipicolinate + NADPH + H(+). The protein operates within amino-acid biosynthesis; L-lysine biosynthesis via DAP pathway; (S)-tetrahydrodipicolinate from L-aspartate: step 4/4. Its function is as follows. Catalyzes the conversion of 4-hydroxy-tetrahydrodipicolinate (HTPA) to tetrahydrodipicolinate. This chain is 4-hydroxy-tetrahydrodipicolinate reductase, found in Shewanella sp. (strain ANA-3).